The chain runs to 694 residues: Katanin p80 WD40 repeat-containing subunit B1 (694 aa).

WD repeat units lie at residues 18–58, 61–100, 103–142, 145–186, 188–226, and 229–269; these read AHSS…CIMS, GHTS…ILRT, GHKA…CVFR, GHTQ…TEFT, HTSA…MIGS, and GETG…DVVH. Disordered regions lie at residues 319–410 and 470–492; these read KPIP…PFPA and TTSA…STGI. The segment covering 327-349 has biased composition (polar residues); that stretch reads ALGTTLRRNYERPTTSCTGQEMK. The segment covering 350–378 has biased composition (basic and acidic residues); sequence QSSEADRRSPEGERRSPSSEDEKEDKESS. A compositionally biased stretch (low complexity) spans 470-481; that stretch reads TTSASSPSRPVV. A compositionally biased stretch (polar residues) spans 482 to 492; that stretch reads NTTKPKPSTGI.

The protein belongs to the WD repeat KATNB1 family. In terms of assembly, interacts with katna1. This interaction enhances the microtubule binding and severing activity of katna1 and also targets this activity to the centrosome.

The protein localises to the cytoplasm. The protein resides in the cytoskeleton. Its subcellular location is the microtubule organizing center. It localises to the centrosome. It is found in the spindle pole. The protein localises to the spindle. Its function is as follows. Participates in a complex which severs microtubules in an ATP-dependent manner. May act to target the enzymatic subunit of this complex to sites of action such as the centrosome. Microtubule severing may promote rapid reorganization of cellular microtubule arrays and the release of microtubules from the centrosome following nucleation. In Danio rerio (Zebrafish), this protein is Katanin p80 WD40 repeat-containing subunit B1 (katnb1).